The primary structure comprises 364 residues: Fructose-1,6-bisphosphatase class 1 2 (364 aa).

Mg(2+) is bound by residues E101, D123, L125, and D126. Residues 126–129 (DGSS) and N218 each bind substrate. E290 provides a ligand contact to Mg(2+).

The protein belongs to the FBPase class 1 family. Homotetramer. Mg(2+) serves as cofactor.

It is found in the cytoplasm. The catalysed reaction is beta-D-fructose 1,6-bisphosphate + H2O = beta-D-fructose 6-phosphate + phosphate. Its pathway is carbohydrate biosynthesis; gluconeogenesis. The chain is Fructose-1,6-bisphosphatase class 1 2 from Cupriavidus taiwanensis (strain DSM 17343 / BCRC 17206 / CCUG 44338 / CIP 107171 / LMG 19424 / R1) (Ralstonia taiwanensis (strain LMG 19424)).